The sequence spans 184 residues: Photosystem I assembly protein Ycf4 (184 aa).

2 helical membrane passes run 19–39 (ISNF…LLVG) and 57–77 (IVFF…LFIS).

This sequence belongs to the Ycf4 family.

The protein localises to the plastid. It is found in the chloroplast thylakoid membrane. Seems to be required for the assembly of the photosystem I complex. This is Photosystem I assembly protein Ycf4 from Nicotiana tomentosiformis (Tobacco).